Consider the following 385-residue polypeptide: MKALQFGAGNIGRGFIGKTLSESGFSVIFSDVNQNIVDAINYNREYFVKIIGSNQNKTVNIKRVSAINSNDSNIKKIISSVDLITTAVGPTALEKIALIITQGIIFKIKNQFTKPLNIIACENKIKSSSFLKQVVLKNLPIKYHDYLNKYIGFIDCSIDTIIPAINNKDDLFLTVEEFKEWIVNINQFKGAVPKIVDMKFSNNLDAFIERKLFTLNTGHAIAAYLGLIKNYKTIQDAISDKKIRVIVRSAMEESGSVLIKRYNFNKNDHLDYIEKIFLRFENPFLSDKLERIGRNPLQKLRREDRLIKPFLGAFEYNLPYSNLAKGIAAAFYYHNKNDLESIELSSSIKKQGLESTIIKICDLPVNSKEVYSIILEYNLIKKIIR.

Alanine 3 to glycine 14 serves as a coordination point for NAD(+).

It belongs to the mannitol dehydrogenase family.

The enzyme catalyses D-mannitol 1-phosphate + NAD(+) = beta-D-fructose 6-phosphate + NADH + H(+). The polypeptide is Mannitol-1-phosphate 5-dehydrogenase (mtlD) (Buchnera aphidicola subsp. Acyrthosiphon pisum (strain APS) (Acyrthosiphon pisum symbiotic bacterium)).